Consider the following 389-residue polypeptide: Probable tRNA pseudouridine synthase D 1 (389 aa).

D63 serves as the catalytic Nucleophile. The TRUD domain occupies 135-345 (GAPNYYDDQR…KYTKRPIISI (211 aa)).

The protein belongs to the pseudouridine synthase TruD family.

The enzyme catalyses uridine(13) in tRNA = pseudouridine(13) in tRNA. Functionally, could be responsible for synthesis of pseudouridine from uracil-13 in transfer RNAs. The chain is Probable tRNA pseudouridine synthase D 1 (truD1) from Methanococcus maripaludis (strain DSM 14266 / JCM 13030 / NBRC 101832 / S2 / LL).